Reading from the N-terminus, the 173-residue chain is Alpha-crystallin A chain (173 aa).

Position 1 is an N-acetylmethionine (Met1). The required for complex formation with BFSP1 and BFSP2 stretch occupies residues 1-63 (MDIAIQHPWF…RTVLDSGISE (63 aa)). Gln6 carries the deamidated glutamine; partial modification. At Ser45 the chain carries Phosphoserine. Gln50 bears the Deamidated glutamine; partial mark. A sHSP domain is found at 52 to 162 (LFRTVLDSGI…GHSERAIPVS (111 aa)). Lys70 is subject to N6-acetyllysine. Gln90 carries the deamidated glutamine; partial modification. Lys99 is modified (N6-acetyllysine). Residue His100 coordinates Zn(2+). Asn101 is subject to Deamidated asparagine; partial. Glu102 and His107 together coordinate Zn(2+). Position 122 is a phosphoserine (Ser122). Asn123 carries the post-translational modification Deamidated asparagine; partial. The tract at residues 144–173 (PKVPSGVDAGHSERAIPVSREEKPSSAPSS) is disordered. A compositionally biased stretch (basic and acidic residues) spans 153 to 167 (GHSERAIPVSREEKP). Residue His154 participates in Zn(2+) binding. The O-linked (GlcNAc) serine glycan is linked to Ser162.

This sequence belongs to the small heat shock protein (HSP20) family. Heteromer composed of three CRYAA and one CRYAB subunits. Inter-subunit bridging via zinc ions enhances stability, which is crucial as there is no protein turn over in the lens. Can also form homodimers and homotetramers (dimers of dimers) which serve as the building blocks of homooligomers. Within homooligomers, the zinc-binding motif is created from residues of 3 different molecules. His-100 and Glu-102 from one molecule are ligands of the zinc ion, and His-107 and His-154 residues from additional molecules complete the site with tetrahedral coordination geometry. Part of a complex required for lens intermediate filament formation composed of BFSP1, BFSP2 and CRYAA. Post-translationally, acetylation at Lys-70 may increase chaperone activity. In terms of processing, undergoes age-dependent proteolytical cleavage at the C-terminus.

The protein localises to the cytoplasm. The protein resides in the nucleus. Its function is as follows. Contributes to the transparency and refractive index of the lens. Acts as a chaperone, preventing aggregation of various proteins under a wide range of stress conditions. Required for the correct formation of lens intermediate filaments as part of a complex composed of BFSP1, BFSP2 and CRYAA. The polypeptide is Alpha-crystallin A chain (CRYAA) (Ovis aries (Sheep)).